Here is a 500-residue protein sequence, read N- to C-terminus: NAD(P)H-quinone oxidoreductase chain 4, chloroplastic (500 aa).

A run of 14 helical transmembrane segments spans residues 4–24, 35–55, 87–107, 113–130, 134–154, 167–187, 211–231, 242–262, 272–292, 305–325, 330–350, 386–406, 416–436, and 466–486; these read FPWL…MLFL, YTIC…CYNF, IGTI…AFPV, LFHF…GSFS, LLLF…LLSM, FILY…GISL, IILY…IPLH, HYST…YGLV, AHSM…IYAA, IAYS…SITD, GAIL…FLAG, LALP…GIIT, ILII…LLSM, and ISSL…LALA.

It belongs to the complex I subunit 4 family.

The protein localises to the plastid. It is found in the chloroplast thylakoid membrane. The enzyme catalyses a plastoquinone + NADH + (n+1) H(+)(in) = a plastoquinol + NAD(+) + n H(+)(out). The catalysed reaction is a plastoquinone + NADPH + (n+1) H(+)(in) = a plastoquinol + NADP(+) + n H(+)(out). This is NAD(P)H-quinone oxidoreductase chain 4, chloroplastic from Aethionema grandiflorum (Persian stone-cress).